Reading from the N-terminus, the 281-residue chain is Phosphonates import ATP-binding protein PhnC (281 aa).

The 244-residue stretch at F2–K245 folds into the ABC transporter domain. Position 34 to 41 (G34 to S41) interacts with ATP.

The protein belongs to the ABC transporter superfamily. Phosphonates importer (TC 3.A.1.9.1) family. In terms of assembly, the complex is composed of two ATP-binding proteins (PhnC), two transmembrane proteins (PhnE) and a solute-binding protein (PhnD).

It localises to the cell inner membrane. The catalysed reaction is phosphonate(out) + ATP + H2O = phosphonate(in) + ADP + phosphate + H(+). Functionally, part of the ABC transporter complex PhnCDE involved in phosphonates import. Responsible for energy coupling to the transport system. The chain is Phosphonates import ATP-binding protein PhnC from Rhizobium etli (strain ATCC 51251 / DSM 11541 / JCM 21823 / NBRC 15573 / CFN 42).